A 207-amino-acid polypeptide reads, in one-letter code: 3-demethoxyubiquinol 3-hydroxylase (207 aa).

Fe cation-binding residues include E56, E86, H89, E138, E170, and H173.

It belongs to the COQ7 family. The cofactor is Fe cation.

It is found in the cell membrane. It carries out the reaction a 5-methoxy-2-methyl-3-(all-trans-polyprenyl)benzene-1,4-diol + AH2 + O2 = a 3-demethylubiquinol + A + H2O. It functions in the pathway cofactor biosynthesis; ubiquinone biosynthesis. Functionally, catalyzes the hydroxylation of 2-nonaprenyl-3-methyl-6-methoxy-1,4-benzoquinol during ubiquinone biosynthesis. The sequence is that of 3-demethoxyubiquinol 3-hydroxylase from Dechloromonas aromatica (strain RCB).